A 491-amino-acid polypeptide reads, in one-letter code: Cobyric acid synthase (491 aa).

The 188-residue stretch at 250–437 (QLRVVVPVLP…VHGVFDHPQA (188 aa)) folds into the GATase cobBQ-type domain. The active-site Nucleophile is C331. H429 is a catalytic residue.

It belongs to the CobB/CobQ family. CobQ subfamily.

Its pathway is cofactor biosynthesis; adenosylcobalamin biosynthesis. In terms of biological role, catalyzes amidations at positions B, D, E, and G on adenosylcobyrinic A,C-diamide. NH(2) groups are provided by glutamine, and one molecule of ATP is hydrogenolyzed for each amidation. The chain is Cobyric acid synthase from Xanthomonas axonopodis pv. citri (strain 306).